Here is an 88-residue protein sequence, read N- to C-terminus: Three-finger toxin 3FTx-2 (88 aa).

An N-terminal signal peptide occupies residues 1-21 (MKTLLLTLVVVTIVCLDLGNT). Intrachain disulfides connect cysteine 27–cysteine 48, cysteine 41–cysteine 66, cysteine 70–cysteine 81, and cysteine 82–cysteine 87.

It belongs to the three-finger toxin family. Ancestral subfamily. Orphan group II sub-subfamily. Expressed by the venom gland.

It is found in the secreted. Binds with low affinity to muscular (alpha-1-beta-1-delta-epsilon/CHRNA1-CHRNB1-CHRND-CHRNE) and very low affinity to neuronal (alpha-7/CHRNA7) nicotinic acetylcholine receptor (nAChR). The sequence is that of Three-finger toxin 3FTx-2 from Micrurus corallinus (Brazilian coral snake).